The chain runs to 238 residues: Orotidine 5'-phosphate decarboxylase (238 aa).

Substrate-binding positions include aspartate 18, lysine 40, 67–76 (DMKLLDIDNT), threonine 122, arginine 183, glutamine 192, and arginine 213. Lysine 69 acts as the Proton donor in catalysis.

Belongs to the OMP decarboxylase family. Type 1 subfamily. Homodimer.

The catalysed reaction is orotidine 5'-phosphate + H(+) = UMP + CO2. The protein operates within pyrimidine metabolism; UMP biosynthesis via de novo pathway; UMP from orotate: step 2/2. Catalyzes the decarboxylation of orotidine 5'-monophosphate (OMP) to uridine 5'-monophosphate (UMP). This chain is Orotidine 5'-phosphate decarboxylase, found in Brucella canis (strain ATCC 23365 / NCTC 10854 / RM-666).